The chain runs to 760 residues: H(+)/Cl(-) exchange transporter 4 (760 aa).

The Cytoplasmic segment spans residues 1–67; it reads MVNAGAMSGS…WEFIKSLLDA (67 aa). The segment at 14-63 is required for localization in the endoplasmic reticulum; sequence MDFLDEPFPDVGTYEDFHTIDWLREKSRDTDRHRKITSKSKESIWEFIKS. The next 2 helical transmembrane spans lie at 68-105 and 151-174; these read WSGW…VCLS and LNYL…VRVF. Positions 180–184 match the Selectivity filter part_1 motif; it reads GSGIP. Residue S181 participates in chloride binding. Positions 183-190 form an intramembrane region, helical; it reads IPEIKTIL. A run of 2 helical transmembrane segments spans residues 200–218 and 224–243; these read GKWT…VSSG and EGPL…SLFS. A Selectivity filter part_2 motif is present at residues 222-226; the sequence is GKEGP. 2 intramembrane regions (helical) span residues 255–267 and 271–279; these read VLSA…VSVA and PIGGVLFSL. The next 5 helical transmembrane spans lie at 291 to 309, 333 to 358, 365 to 385, 442 to 462, and 467 to 486; these read LWRS…RSIN, FPFI…AWCR, LGKY…IIAY, MWQL…TFGM, and GLFI…VGIG. The Selectivity filter part_3 motif lies at 467–471; it reads GLFIP. F469 is a binding site for chloride. Intramembrane regions (helical) lie at residues 514-528 and 532-543; these read GLYA…LGGV and TVSLVVIMFELT. The note=Loop between two helices intramembrane region spans 544–547; that stretch reads GGLE. The chain crosses the membrane as a helical span at residues 548–566; that stretch reads YIVPLMAAAVTSKWVADAF. The Cytoplasmic portion of the chain corresponds to 567–760; sequence GKEGIYEAHI…NQDPESIMFN (194 aa). Y572 contributes to the chloride binding site. A CBS 1 domain is found at 600-666; the sequence is MRPRRGEPPL…AIKNARQRQE (67 aa). Residues S610 and 631–633 each bind ATP; that span reads YNG. A required for localization in the endoplasmic reticulum region spans residues 667–696; it reads GIVSNSIMYFTEEPPELPANSPHPLKLRRI. In terms of domain architecture, CBS 2 spans 697 to 755; the sequence is LNLSPFTVTDHTPMETVVDIFRKLGLRQCLVTRSGRLLGIITKKDVLRHMAQMANQDPE. ATP is bound at residue 738–741; that stretch reads TKKD.

This sequence belongs to the chloride channel (TC 2.A.49) family. ClC-4/CLCN4 subfamily. Monomer. Forms heterodimers with CLCN3. As to expression, abundant in skeletal muscle and also detectable in brain and heart.

The protein resides in the early endosome membrane. The protein localises to the late endosome membrane. Its subcellular location is the endoplasmic reticulum membrane. It is found in the lysosome membrane. It localises to the recycling endosome membrane. Its function is as follows. Strongly outwardly rectifying, electrogenic H(+)/Cl(-)exchanger which mediates the exchange of chloride ions against protons. The CLC channel family contains both chloride channels and proton-coupled anion transporters that exchange chloride or another anion for protons. The presence of conserved gating glutamate residues is typical for family members that function as antiporters. In Homo sapiens (Human), this protein is H(+)/Cl(-) exchange transporter 4 (CLCN4).